A 1202-amino-acid polypeptide reads, in one-letter code: Adenine-specific methyltransferase PglX (1202 aa).

This sequence belongs to the methyltransferase superfamily. PglX adenine methyltransferase family.

It carries out the reaction a 2'-deoxyadenosine in DNA + S-adenosyl-L-methionine = an N(6)-methyl-2'-deoxyadenosine in DNA + S-adenosyl-L-homocysteine + H(+). Functionally, BREX systems (bacteriophage exclusion) provide immunity against bacteriophage. Part of a type 1 BREX system which protects against dsDNA phage. This system allows phage adsorption but prevents phage DNA replication, without degradation of the phage DNA. Methylation of bacterial DNA by this protein guides self/non-self discrimination. In terms of biological role, probably methylates the adenine in the fifth position of the hexamer 5'-ACRCAG-3' in genomic DNA. N(6)-methylated adenine on the fifth position of 5'-ACRCAG-3' is found in the genome; there are 1906 sites in the genomic DNA. This chain is Adenine-specific methyltransferase PglX, found in Lacticaseibacillus casei (strain Zhang) (Lactobacillus casei).